A 221-amino-acid polypeptide reads, in one-letter code: ATP-dependent dethiobiotin synthetase BioD (221 aa).

Residue 11–16 (DIGKTL) coordinates ATP. Mg(2+) is bound at residue Thr15. Lys35 is an active-site residue. Substrate is bound at residue Thr39. Residues Asp44 and 103 to 106 (EGAG) contribute to the ATP site. The Mg(2+) site is built by Asp44 and Glu103.

This sequence belongs to the dethiobiotin synthetase family. Homodimer. It depends on Mg(2+) as a cofactor.

It is found in the cytoplasm. The enzyme catalyses (7R,8S)-7,8-diammoniononanoate + CO2 + ATP = (4R,5S)-dethiobiotin + ADP + phosphate + 3 H(+). The protein operates within cofactor biosynthesis; biotin biosynthesis; biotin from 7,8-diaminononanoate: step 1/2. Catalyzes a mechanistically unusual reaction, the ATP-dependent insertion of CO2 between the N7 and N8 nitrogen atoms of 7,8-diaminopelargonic acid (DAPA, also called 7,8-diammoniononanoate) to form a ureido ring. This chain is ATP-dependent dethiobiotin synthetase BioD, found in Leptospira borgpetersenii serovar Hardjo-bovis (strain L550).